The following is a 649-amino-acid chain: Flavin-dependent oxygenase ucdD (649 aa).

FAD contacts are provided by Gln92, Ile185, Tyr344, Asp370, and Ser386.

Belongs to the PheA/TfdB FAD monooxygenase family. Homodimer. Requires FAD as cofactor.

It functions in the pathway secondary metabolite biosynthesis. In terms of biological role, nonribosomal peptide synthetase that mediates the biosynthesis of usterphenyllins and uscandidusins, p-terphenyl derivatives. Within the pathway, ucdD catalyzes the formation of 3,15-dihydroxyterphenyllin via dihydroxylation at C-3 of ring A and C-15 of ring C of the terphenyllin intermediate. The pathway begin with the biosynthesis of 4-hydroxyphenylpyruvate (HPPA) from L-tyrosine, possibly by the aminotransferase ucdG. The nonribosomal peptide synthetase ucdA then condenses two HPPA units to produce atromentin. The key step in this pathway is the reduction and dehydration of atromentin to form a terphenyl triol intermediate, performed by the NAD-dependent dehydrogenase ucdB. Further O-methylation by the methyltransferase ucdC forms terphenyllin carrying two methoxy moieties at C-9 and C-12, and subsequent dihydroxylation at C-3 of ring A and C-15 of ring C by the flavin-dependent oxygenase ucdD leads to 3,15-dihydroxyterphenyllin. Prenylation by ucdE at position C-5 of ring A forms usterphenyllin B, and is followed by a second prenylation at position C-14 of ring C to form usterphenyllin A. The following furan ring formation that leads to uscandidusins A and B was proven to be an unexpected spontaneous non-enzymatic reaction. The polypeptide is Flavin-dependent oxygenase ucdD (Aspergillus ustus).